Consider the following 251-residue polypeptide: MRTPIIAGNWKLFKKSSEAQDFVAELIPLVQKTTDVEIVIAPVFTVLSAVKRAIADCNIMLSAQDCFWEEEGAFTGEISPGMLVDAGCSHVIIGHSERRQYFGETDETVNRKIKAAITAGLTVLFCIGETLAEREADKTFEVLRTQIENGLAGLARGDLAKIVIAYEPVWAIGTGKTATDEQAQIAHAFIRKVVGELFTVQIAETIRILYGGSVKPENVRGLMNQPDIDGALVGGASLKADSFGAIVNYKA.

Residue 9–11 (NWK) coordinates substrate. Catalysis depends on histidine 95, which acts as the Electrophile. Glutamate 167 acts as the Proton acceptor in catalysis. Residues glycine 173, serine 213, and 234-235 (GG) contribute to the substrate site.

Belongs to the triosephosphate isomerase family. Homodimer.

It localises to the cytoplasm. It carries out the reaction D-glyceraldehyde 3-phosphate = dihydroxyacetone phosphate. Its pathway is carbohydrate biosynthesis; gluconeogenesis. It functions in the pathway carbohydrate degradation; glycolysis; D-glyceraldehyde 3-phosphate from glycerone phosphate: step 1/1. In terms of biological role, involved in the gluconeogenesis. Catalyzes stereospecifically the conversion of dihydroxyacetone phosphate (DHAP) to D-glyceraldehyde-3-phosphate (G3P). The sequence is that of Triosephosphate isomerase from Geobacter metallireducens (strain ATCC 53774 / DSM 7210 / GS-15).